Reading from the N-terminus, the 829-residue chain is RNA-directed RNA polymerase (829 aa).

A disordered region spans residues 1–39 (MKEPVDCRLSTPAGFSGTVPPPGRTKAARPGTIPVRRSR).

In terms of assembly, forms a ribonucleoprotein complex with the 20S RNA, where a single polymerase molecule binds to a single viral RNA genome. Since the viral RNA is not encapsidated, ribonucleoprotein complex formation appears to be the strategy to survive in the host as persistent virus.

The protein resides in the host cytoplasm. The catalysed reaction is RNA(n) + a ribonucleoside 5'-triphosphate = RNA(n+1) + diphosphate. RNA-directed RNA polymerase that replicates the viral (+) and (-) genome. This is RNA-directed RNA polymerase from Saccharomyces cerevisiae (Baker's yeast).